Reading from the N-terminus, the 674-residue chain is MPSYTVTVATGSQWFAGTDDYIYLSLIGSAGCSEKHLLDKAFYNDFERGAVDSYDVTVDEELGEIYLVKIEKRKYWLHDDWYLKYITLKTPHGDYIEFPCYRWITGEGEIVLRDGRAKLARDDQIHILKQHRRKELEARQKQYRWMEWNPGFPLSIDAKCHKDLPRDIQFDSEKGVDFVLNYSKAMENLFINRFMHMFQSSWHDFADFEKIFVKISNTISERVKNHWQEDLMFGYQFLNGCNPVLIKRCTALPPKLPVTTEMVECSLERQLSLEQEVQEGNIFIVDYELLDGIDANKTDPCTHQFLAAPICLLYKNLANKIVPIAIQLNQTPGESNPIFLPTDSKYDWLLAKIWVRSSDFHVHQTITHLLRTHLVSEVFGIAMYRQLPAVHPLFKLLVAHVRFTIAINTKAREQLICEYGLFDKANATGGGGHVQMVQRAVQDLTYSSLCFPEAIKARGMDSTEDIPFYFYRDDGLLVWEAIQSFTMEVVSIYYENDQVVEEDQELQDFVKDVYVYGMRGKKASGFPKSIKSREKLSEYLTVVIFTASAQHAAVNFGQYDWCSWIPNAPPTMRAPPPTAKGVVTIEQIVDTLPDRGRSCWHLGAVWALSQFQENELFLGMYPEEHFIEKPVKEAMIRFRKNLEAIVSVIAERNKNKKLPYYYLSPDRIPNSVAI.

One can recognise a PLAT domain in the interval 2-118 (PSYTVTVATG…EIVLRDGRAK (117 aa)). 8 residues coordinate Ca(2+): Gly17, Thr18, Asp19, Asn44, Asp45, Glu47, Asp79, and Asp80. One can recognise a Lipoxygenase domain in the interval 119–674 (LARDDQIHIL…PDRIPNSVAI (556 aa)). Ser272 carries the post-translational modification Phosphoserine. His368 and His373 together coordinate Fe cation. Ser524 is subject to Phosphoserine. Fe cation is bound by residues His551, Asn555, and Ile674.

It belongs to the lipoxygenase family. Homodimer. Interacts with ALOX5AP and LTC4S. Interacts with COTL1, the interaction is required for stability and efficient catalytic activity. Interacts with PIK3R1; this interaction bridges ALOX5 with CD40 after CD40 ligation in B cells and leads to the production of reactive oxygen species (ROS). Interacts (via PLAT domain) with DICER1 (via Dicer dsRNA-binding fold domain); this interaction enhances arachidonate 5-lipoxygenase activity and modifies the miRNA precursor processing activity of DICER1. Fe cation serves as cofactor. In terms of processing, serine phosphorylation by MAPKAPK2 is stimulated by arachidonic acid. Phosphorylation on Ser-524 by PKA has an inhibitory effect. Phosphorylation on Ser-272 prevents export from the nucleus. Phosphorylation at Ser-524 is stimulated by 8-bromo-3',5'-cyclic AMP or prostaglandin E2. In terms of tissue distribution, expressed in skin Langerhans cells and their emigrated counterparts in draining lymph nodes. Highly expressed in circulating leukocytes.

The protein localises to the cytoplasm. It localises to the nucleus matrix. It is found in the nucleus membrane. The protein resides in the perinuclear region. Its subcellular location is the cytosol. The protein localises to the nucleus envelope. It localises to the nucleus intermembrane space. It catalyses the reaction (5Z,8Z,11Z,14Z)-eicosatetraenoate + O2 = (5S)-hydroperoxy-(6E,8Z,11Z,14Z)-eicosatetraenoate. It carries out the reaction (5Z,8Z,11Z,14Z)-eicosatetraenoate + O2 = leukotriene A4 + H2O. The catalysed reaction is (5Z,8Z,11Z,14Z)-eicosatetraenoate + O2 = (8S)-hydroperoxy-(5Z,9E,11Z,14Z)-eicosatetraenoate. The enzyme catalyses (5Z,8Z,11Z,14Z)-eicosatetraenoate + O2 = (12S)-hydroperoxy-(5Z,8Z,10E,14Z)-eicosatetraenoate. It catalyses the reaction 18-HEPE + O2 = (5S)-hydroperoxy-18-hydroxy-(7E,9E,11Z,14Z,16E)-eicosapentaenoate. It carries out the reaction (18R)-hydroxy-(5Z,8Z,11Z,14Z,16E)-eicosapentaenoate + O2 = (5S)-hydroperoxy-(18R)-hydroxy-(6E,8Z,11Z,14Z,16E)-eicosapentaenoate. The catalysed reaction is (18S)-hydroxy-(5Z,8Z,11Z,14Z,16E)-eicosapentaenoate + O2 = (5S)-hydroperoxy-(18S)-hydroxy-(6E,8Z,11Z,14Z,16E)-eicosapentaenoate. The enzyme catalyses (5S)-hydroperoxy-(18S)-hydroxy-(6E,8Z,11Z,14Z,16E)-eicosapentaenoate = (5S,6S)-epoxy-(18S)-hydroxy-(7E,9E,11Z,14Z,16E)-eicosapentaenoate + H2O. It catalyses the reaction (5S)-hydroperoxy-(18R)-hydroxy-(6E,8Z,11Z,14Z,16E)-eicosapentaenoate = (5S,6S)-epoxy-(18R)-hydroxy-(7E,9E,11Z,14Z,16E)-eicosapentaenoate + H2O. It carries out the reaction (5S)-hydroperoxy-18-hydroxy-(7E,9E,11Z,14Z,16E)-eicosapentaenoate = (5S,6S)-epoxy-18-hydroxy-(7E,9E,11Z,14Z,16E)-eicosapentaenoate + H2O. The catalysed reaction is (15S)-hydroxy-(5Z,8Z,11Z,13E)-eicosatetraenoate + O2 = (5S)-hydroperoxy-(15S)-hydroxy-(6E,8Z,11Z,13E)-eicosatetraenoate. The enzyme catalyses (5S)-hydroperoxy-(6E,8Z,11Z,14Z)-eicosatetraenoate = leukotriene A4 + H2O. It catalyses the reaction (5Z,8Z)-eicosadienoate + O2 = (5S)-hydroperoxy-(6E,8Z)-eicosadienoate. It carries out the reaction (12S)-hydroxy-(5Z,8Z,10E,14Z)-eicosatetraenoate + O2 = (5S)-hydroperoxy-(12S)-hydroxy-(6E,8Z,10E,14Z)-eicosatetraenoate. The catalysed reaction is (5Z,8Z,11Z,14Z,17Z)-eicosapentaenoate + O2 = 5-hydroperoxy-(6E,8Z,11Z,14Z,17Z)-eicosapentaenoate. The enzyme catalyses (4Z,7Z,10Z,13Z,16Z,19Z)-docosahexaenoate + O2 = (14S)-hydroperoxy-(4Z,7Z,10Z,12E,16Z,19Z)-docosahexaenoate. It catalyses the reaction (4Z,7Z,10Z,13Z,16Z,19Z)-docosahexaenoate + O2 = (7S)-hydroperoxy-(4Z,8E,10Z,13Z,16Z,19Z)-docosahexaenoate. It carries out the reaction (4Z,7Z,10Z,13Z,16Z,19Z)-docosahexaenoate + O2 = (17S)-hydroperoxy-(4Z,7Z,10Z,13Z,15E,19Z)-docosahexaenoate. It participates in lipid metabolism; leukotriene A4 biosynthesis. Catalyzes the oxygenation of arachidonate to 5-hydroperoxyeicosatetraenoate (5-HPETE) followed by the dehydration to 5,6- epoxyeicosatetraenoate (Leukotriene A4/LTA4), the first two steps in the biosynthesis of leukotrienes, which are potent mediators of inflammation. Also catalyzes the oxygenation of arachidonic acid into 8-hydroperoxyicosatetraenoic acid (8-HPETE) and 12-hydroperoxyicosatetraenoic acid (12-HPETE). Displays lipoxin synthase activity being able to convert (15S)-HETE into a conjugate tetraene. Although arachidonate is the preferred substrate, this enzyme can also metabolize oxidized fatty acids derived from arachidonate such as (15S)-HETE, eicosapentaenoate (EPA) such as (18R)- and (18S)-HEPE or docosahexaenoate (DHA) which lead to the formation of specialized pro-resolving mediators (SPM) lipoxin and resolvins E and D respectively, therefore it participates in anti-inflammatory responses. Oxidation of DHA directly inhibits endothelial cell proliferation and sprouting angiogenesis via peroxisome proliferator-activated receptor gamma (PPARgamma). It does not catalyze the oxygenation of linoleic acid and does not convert (5S)-HETE to lipoxin isomers. In addition to inflammatory processes, participates in dendritic cell migration, wound healing through an antioxidant mechanism based on heme oxygenase-1 (HO-1) regulation expression, monocyte adhesion to the endothelium via ITGAM expression on monocytes. Moreover, it helps establish an adaptive humoral immunity by regulating primary resting B cells and follicular helper T cells and participates in the CD40-induced production of reactive oxygen species (ROS) after CD40 ligation in B cells through interaction with PIK3R1 that bridges ALOX5 with CD40. May also play a role in glucose homeostasis, regulation of insulin secretion and palmitic acid-induced insulin resistance via AMPK. Can regulate bone mineralization and fat cell differentiation increases in induced pluripotent stem cells. This chain is Polyunsaturated fatty acid 5-lipoxygenase, found in Mus musculus (Mouse).